A 375-amino-acid chain; its full sequence is Protein kinase MCK1 (375 aa).

Residue serine 2 is modified to N-acetylserine. In terms of domain architecture, Protein kinase spans 35–327 (VKEYRKIGRG…PRRILAHQFF (293 aa)). ATP-binding positions include 41 to 49 (IGRGAFGTV) and lysine 68. Catalysis depends on aspartate 164, which acts as the Proton acceptor. Residue serine 198 is modified to Phosphoserine. Tyrosine 199 is modified (phosphotyrosine). Serine 202 is subject to Phosphoserine.

This sequence belongs to the protein kinase superfamily. Ser/Thr protein kinase family. In terms of processing, phosphorylated at tyrosine and serine.

The enzyme catalyses L-seryl-[protein] + ATP = O-phospho-L-seryl-[protein] + ADP + H(+). The catalysed reaction is L-threonyl-[protein] + ATP = O-phospho-L-threonyl-[protein] + ADP + H(+). It catalyses the reaction L-tyrosyl-[protein] + ATP = O-phospho-L-tyrosyl-[protein] + ADP + H(+). In terms of biological role, may be an autophosphorylating tyrosine kinase, a bifunctional (serine/tyrosine-specific) protein kinase, or a serine kinase that is a substrate for an associated tyrosine kinase. MCK1 is a transcriptional activator of IME1, it stimulates spore maturation, and play a positive regulatory role in both mitotic centromere function and activation of early meiotic gene expression. The protein is Protein kinase MCK1 (MCK1) of Saccharomyces cerevisiae (strain ATCC 204508 / S288c) (Baker's yeast).